Reading from the N-terminus, the 393-residue chain is Riboflavin biosynthesis protein RibBA (393 aa).

The interval M1–A200 is DHBP synthase. D-ribulose 5-phosphate contacts are provided by residues R27–E28, D32, R139–T143, and E163. Residue E28 participates in Mg(2+) binding. Residue H142 participates in Mg(2+) binding. Residues V201–I393 form a GTP cyclohydrolase II region. GTP is bound at residue R249–A253. C254, C265, and C267 together coordinate Zn(2+). GTP contacts are provided by residues Q270, E291–R293, and T313. The Proton acceptor; for GTP cyclohydrolase activity role is filled by D325. R327 (nucleophile; for GTP cyclohydrolase activity) is an active-site residue. S348 and K353 together coordinate GTP.

It in the N-terminal section; belongs to the DHBP synthase family. The protein in the C-terminal section; belongs to the GTP cyclohydrolase II family. Mg(2+) is required as a cofactor. The cofactor is Mn(2+). Requires Zn(2+) as cofactor.

The enzyme catalyses D-ribulose 5-phosphate = (2S)-2-hydroxy-3-oxobutyl phosphate + formate + H(+). It carries out the reaction GTP + 4 H2O = 2,5-diamino-6-hydroxy-4-(5-phosphoribosylamino)-pyrimidine + formate + 2 phosphate + 3 H(+). The protein operates within cofactor biosynthesis; riboflavin biosynthesis; 2-hydroxy-3-oxobutyl phosphate from D-ribulose 5-phosphate: step 1/1. It functions in the pathway cofactor biosynthesis; riboflavin biosynthesis; 5-amino-6-(D-ribitylamino)uracil from GTP: step 1/4. In terms of biological role, catalyzes the conversion of D-ribulose 5-phosphate to formate and 3,4-dihydroxy-2-butanone 4-phosphate. Catalyzes the conversion of GTP to 2,5-diamino-6-ribosylamino-4(3H)-pyrimidinone 5'-phosphate (DARP), formate and pyrophosphate. This is Riboflavin biosynthesis protein RibBA from Staphylococcus epidermidis (strain ATCC 35984 / DSM 28319 / BCRC 17069 / CCUG 31568 / BM 3577 / RP62A).